A 328-amino-acid polypeptide reads, in one-letter code: Naphthalene 1,2-dioxygenase/salicylate 5-hydroxylase systems, ferredoxin--NAD(P)(+), reductase component (328 aa).

In terms of domain architecture, 2Fe-2S ferredoxin-type spans 1–89 (MELVVEPLNL…DCTIEIPESD (89 aa)). Residues Cys35, Cys40, Cys43, and Cys73 each contribute to the [2Fe-2S] cluster site. The region spanning 96–193 (ARIVKGTVTA…SGPLGTAYLR (98 aa)) is the FAD-binding FR-type domain.

Belongs to the bacterial ring-hydroxylating dioxygenase ferredoxin reductase family. As to quaternary structure, ferredoxin reductase NagAa belongs to both the salicylate 5-hydroxylase (S5H) and the naphthalene 1,2-dioxygenase (NDO) multicomponent enzyme systems. The NDO multicomponent enzyme system is composed of an electron transfer component and a dioxygenase component (iron sulfur protein (ISP)). The electron transfer component is composed of a ferredoxin reductase (NagAa) and a ferredoxin (NagAb), and the dioxygenase component is formed by a large alpha subunit (NagAc) and a small beta subunit (NagAd). The S5H multicomponent enzyme system is composed of an electron transfer component and a monooxygenase component. The electron transfer component is comprised of a ferredoxin reductase (NagAa) and a ferredoxin (NagAb), and the monooxygenase component is formed by a large subunit (NagG) and a small subunit (NagH). The cofactor is [2Fe-2S] cluster. FAD is required as a cofactor.

The catalysed reaction is 2 reduced [2Fe-2S]-[ferredoxin] + NAD(+) + H(+) = 2 oxidized [2Fe-2S]-[ferredoxin] + NADH. It catalyses the reaction 2 reduced [2Fe-2S]-[ferredoxin] + NADP(+) + H(+) = 2 oxidized [2Fe-2S]-[ferredoxin] + NADPH. Its pathway is aromatic compound metabolism; naphthalene degradation. Functionally, component of two multicomponent enzyme systems which are involved in the catabolism of naphthalene. Plays a role as an electron transfer component for both salicylate 5-hydroxylase (S5H) and naphthalene 1,2-dioxygenase (NDO) systems, by transferring electrons from NAD(P)H to the oxygenase component via the ferredoxin NagAb. The electron transport chain from the two systems can use both NADH and NADPH as electron donors at approximately similar rates. The chain is Naphthalene 1,2-dioxygenase/salicylate 5-hydroxylase systems, ferredoxin--NAD(P)(+), reductase component from Ralstonia sp.